The primary structure comprises 480 residues: 3,6-anhydro-alpha-L-galactose dehydrogenase (480 aa).

NADP(+) is bound by residues Trp149–Asn150, Lys173–Ser176, and Gly226–Ser227. Glu248 (proton acceptor) is an active-site residue. Leu249 is an NADP(+) binding site. Cys282 (nucleophile) is an active-site residue. Glu383 is an NADP(+) binding site.

The protein belongs to the aldehyde dehydrogenase family.

It carries out the reaction 3,6-anhydro-alpha-L-galactopyranose + NADP(+) + H2O = 3,6-anhydro-L-galactonate + NADPH + 2 H(+). The catalysed reaction is 3,6-anhydro-alpha-L-galactopyranose + NAD(+) + H2O = 3,6-anhydro-L-galactonate + NADH + 2 H(+). Its function is as follows. Involved in the degradation of 3,6-anhydro-L-galactose, which is the major monomeric sugar of red macroalgae. Catalyzes the oxidation of 3,6-anhydro-L-galactose (AHG) to form 3,6-anhydrogalactonate (AHGA). This Vibrio sp. (strain EJY3) protein is 3,6-anhydro-alpha-L-galactose dehydrogenase.